Reading from the N-terminus, the 487-residue chain is E3 ubiquitin-protein ligase RNF8 (487 aa).

The FHA domain maps to 38–92; sequence VTIGRGFSVTYQLISKVCPLMISRNHCVLKQNPEGQWTIMDNKSLNGVWLNRERL. Residues 68 to 72 form a required for interaction with PIWIL1 region; it reads QNPEG. Residues 135–195 form a disordered region; that stretch reads CLAPKNDHTT…PEKLHGKGEA (61 aa). Phosphoserine is present on Ser-157. Over residues 184-193 the composition is skewed to basic and acidic residues; that stretch reads AEPEKLHGKG. Residues 405–443 form an RING-type zinc finger; the sequence is CIICSEYFIEAVTLNCAHSFCSFCISEWMKRKVECPICR.

The protein belongs to the RNF8 family. Homodimer. Forms a E2-E3 ubiquitin ligase complex composed of the RNF8 homodimer and a E2 heterodimer of UBE2N and UBE2V2. Interacts with class III E2s, including UBE2E1, UBE2E2, and UBE2E3 and with UBE2N. Interacts with RXRA. Interacts (via FHA domain) with phosphorylated HERC2 (via C-terminus). Interacts with PIWIL1; leading to sequester RNF8 in the cytoplasm. Interacts with WRAP53/TCAB1. Autoubiquitinated through 'Lys-48' and 'Lys-63' of ubiquitin. 'Lys-63' polyubiquitination is mediated by UBE2N. 'Lys-29'-type polyubiquitination is also observed, but it doesn't require its own functional RING-type zinc finger.

Its subcellular location is the nucleus. It localises to the cytoplasm. It is found in the midbody. The protein resides in the chromosome. The protein localises to the telomere. The enzyme catalyses S-ubiquitinyl-[E2 ubiquitin-conjugating enzyme]-L-cysteine + [acceptor protein]-L-lysine = [E2 ubiquitin-conjugating enzyme]-L-cysteine + N(6)-ubiquitinyl-[acceptor protein]-L-lysine.. It participates in protein modification; protein ubiquitination. E3 ubiquitin-protein ligase that plays a key role in DNA damage signaling via 2 distinct roles: by mediating the 'Lys-63'-linked ubiquitination of histones H2A and H2AX and promoting the recruitment of DNA repair proteins at double-strand breaks (DSBs) sites, and by catalyzing 'Lys-48'-linked ubiquitination to remove target proteins from DNA damage sites. Following DNA DSBs, it is recruited to the sites of damage by ATM-phosphorylated MDC1 and catalyzes the 'Lys-63'-linked ubiquitination of histones H2A and H2AX, thereby promoting the formation of TP53BP1 and BRCA1 ionizing radiation-induced foci (IRIF). Also controls the recruitment of UIMC1-BRCC3 (RAP80-BRCC36) and PAXIP1/PTIP to DNA damage sites. Promotes the recruitment of NBN to DNA damage sites by catalyzing 'Lys-6'-linked ubiquitination of NBN. Also recruited at DNA interstrand cross-links (ICLs) sites and catalyzes 'Lys-63'-linked ubiquitination of histones H2A and H2AX, leading to recruitment of FAAP20 and Fanconi anemia (FA) complex, followed by interstrand cross-link repair. H2A ubiquitination also mediates the ATM-dependent transcriptional silencing at regions flanking DSBs in cis, a mechanism to avoid collision between transcription and repair intermediates. Promotes the formation of 'Lys-63'-linked polyubiquitin chains via interactions with the specific ubiquitin-conjugating UBE2N/UBC13 and ubiquitinates non-histone substrates such as PCNA. Substrates that are polyubiquitinated at 'Lys-63' are usually not targeted for degradation. Also catalyzes the formation of 'Lys-48'-linked polyubiquitin chains via interaction with the ubiquitin-conjugating UBE2L6/UBCH8, leading to degradation of substrate proteins such as CHEK2, JMJD2A/KDM4A and KU80/XRCC5: it is still unclear how the preference toward 'Lys-48'- versus 'Lys-63'-linked ubiquitination is regulated but it could be due to RNF8 ability to interact with specific E2 specific ligases. For instance, interaction with phosphorylated HERC2 promotes the association between RNF8 and UBE2N/UBC13 and favors the specific formation of 'Lys-63'-linked ubiquitin chains. Promotes non-homologous end joining (NHEJ) by promoting the 'Lys-48'-linked ubiquitination and degradation the of KU80/XRCC5. Following DNA damage, mediates the ubiquitination and degradation of JMJD2A/KDM4A in collaboration with RNF168, leading to unmask H4K20me2 mark and promote the recruitment of TP53BP1 at DNA damage sites. Following DNA damage, mediates the ubiquitination and degradation of POLD4/p12, a subunit of DNA polymerase delta. In the absence of POLD4, DNA polymerase delta complex exhibits higher proofreading activity. In addition to its function in damage signaling, also plays a role in higher-order chromatin structure by mediating extensive chromatin decondensation. Involved in the activation of ATM by promoting histone H2B ubiquitination, which indirectly triggers histone H4 'Lys-16' acetylation (H4K16ac), establishing a chromatin environment that promotes efficient activation of ATM kinase. Required in the testis, where it plays a role in the replacement of histones during spermatogenesis. At uncapped telomeres, promotes the joining of deprotected chromosome ends by inducing H2A ubiquitination and TP53BP1 recruitment, suggesting that it may enhance cancer development by aggravating telomere-induced genome instability in case of telomeric crisis. Promotes the assembly of RAD51 at DNA DSBs in the absence of BRCA1 and TP53BP1 Also involved in class switch recombination in immune system, via its role in regulation of DSBs repair. May be required for proper exit from mitosis after spindle checkpoint activation and may regulate cytokinesis. May play a role in the regulation of RXRA-mediated transcriptional activity. Not involved in RXRA ubiquitination by UBE2E2. The sequence is that of E3 ubiquitin-protein ligase RNF8 from Rattus norvegicus (Rat).